A 410-amino-acid polypeptide reads, in one-letter code: uncharacterized protein (410 aa).

11 helical membrane-spanning segments follow: residues 14–34 (IIIG…FLAI), 48–68 (GLVI…GGYI), 82–102 (IFGW…WVFF), 140–160 (YAAI…FGSS), 164–184 (TPFL…ALQF), 212–232 (YLFT…SQFS), 251–271 (LYGL…FPIV), 279–299 (PLCS…IFTV), 303–323 (VPSI…LFSM), 342–362 (GAIG…GICI), and 371–391 (IYIF…LAFA).

The protein belongs to the major facilitator superfamily. TCR/Tet family.

The protein localises to the cell membrane. This is an uncharacterized protein from Bacillus subtilis (strain 168).